The sequence spans 325 residues: Metacaspase-9 (325 aa).

Residues His-95 and Cys-147 contribute to the active site. Cys-147 carries the post-translational modification S-nitrosocysteine. Asn-177 carries an N-linked (GlcNAc...) asparagine glycan.

Belongs to the peptidase C14B family. In terms of processing, the two subunits are derived from the precursor sequence by an autocatalytic mechanism. S-nitrosylation at Cys-147 suppresses both autoprocessing and proteolytic activity of the full-length protein, but does not affect the activity of the mature processed form. As to expression, expressed in root tips, cauline leaves, flowers and siliques.

It is found in the secreted. The protein localises to the extracellular space. It localises to the apoplast. With respect to regulation, inhibited by serpin ZX and nitric oxide through cysteine nitrosylation. Its function is as follows. Cysteine protease that cleaves specifically after arginine or lysine residues. Does not cleave caspase-specific substrates. Required for proteolytic processing of GRI. This Arabidopsis thaliana (Mouse-ear cress) protein is Metacaspase-9 (AMC9).